Here is a 288-residue protein sequence, read N- to C-terminus: Quinate/shikimate dehydrogenase (288 aa).

Positions 71 and 107 each coordinate substrate. NAD(+) is bound by residues 132–135 (AGGA), 155–158 (NRRD), lysine 205, 232–235 (CVYN), and glycine 255.

It belongs to the shikimate dehydrogenase family. Homodimer.

The enzyme catalyses L-quinate + NAD(+) = 3-dehydroquinate + NADH + H(+). The catalysed reaction is L-quinate + NADP(+) = 3-dehydroquinate + NADPH + H(+). It carries out the reaction shikimate + NADP(+) = 3-dehydroshikimate + NADPH + H(+). It catalyses the reaction shikimate + NAD(+) = 3-dehydroshikimate + NADH + H(+). It functions in the pathway metabolic intermediate biosynthesis; chorismate biosynthesis; chorismate from D-erythrose 4-phosphate and phosphoenolpyruvate: step 4/7. The actual biological function of YdiB remains unclear, nor is it known whether 3-dehydroshikimate or quinate represents the natural substrate. Catalyzes the reversible NAD-dependent reduction of both 3-dehydroshikimate (DHSA) and 3-dehydroquinate to yield shikimate (SA) and quinate, respectively. It can use both NAD or NADP for catalysis, however it has higher catalytic efficiency with NAD. The polypeptide is Quinate/shikimate dehydrogenase (Escherichia coli O1:K1 / APEC).